A 603-amino-acid polypeptide reads, in one-letter code: Arginine--tRNA ligase (603 aa).

Residues 143 to 153 (PNIAKEMHVGH) carry the 'HIGH' region motif.

Belongs to the class-I aminoacyl-tRNA synthetase family. In terms of assembly, monomer.

The protein resides in the cytoplasm. The enzyme catalyses tRNA(Arg) + L-arginine + ATP = L-arginyl-tRNA(Arg) + AMP + diphosphate. The protein is Arginine--tRNA ligase of Prochlorococcus marinus (strain MIT 9211).